The sequence spans 72 residues: Protein kish-A (72 aa).

Positions 1 to 26 are cleaved as a signal peptide; the sequence is MSAIFNFQSLLTVILLLICTCAYIRS. At 27 to 53 the chain is on the extracellular side; it reads LTPSLLDKNKTGFLGIFWKCARIGERK. Asparagine 35 carries N-linked (GlcNAc...) asparagine glycosylation. The chain crosses the membrane as a helical span at residues 54-71; it reads SPYVAFCCIVMALTILFS. Residue glutamate 72 is a topological domain, cytoplasmic.

It belongs to the KISH family.

The protein localises to the golgi apparatus membrane. Functionally, involved in the early part of the secretory pathway. This chain is Protein kish-A (tmem167a), found in Danio rerio (Zebrafish).